Reading from the N-terminus, the 335-residue chain is Glycerol-3-phosphate dehydrogenase [NAD(P)+] (335 aa).

Residues Ser10, Phe11, Arg31, and Lys105 each contribute to the NADPH site. Residues Lys105, Gly136, and Ser138 each coordinate sn-glycerol 3-phosphate. Ala140 is a binding site for NADPH. The sn-glycerol 3-phosphate site is built by Lys191, Asp244, Ser254, Arg255, and Asn256. The active-site Proton acceptor is the Lys191. Residue Arg255 participates in NADPH binding. NADPH contacts are provided by Val279 and Glu281.

Belongs to the NAD-dependent glycerol-3-phosphate dehydrogenase family.

The protein resides in the cytoplasm. The catalysed reaction is sn-glycerol 3-phosphate + NAD(+) = dihydroxyacetone phosphate + NADH + H(+). The enzyme catalyses sn-glycerol 3-phosphate + NADP(+) = dihydroxyacetone phosphate + NADPH + H(+). It functions in the pathway membrane lipid metabolism; glycerophospholipid metabolism. In terms of biological role, catalyzes the reduction of the glycolytic intermediate dihydroxyacetone phosphate (DHAP) to sn-glycerol 3-phosphate (G3P), the key precursor for phospholipid synthesis. This Leptospira interrogans serogroup Icterohaemorrhagiae serovar copenhageni (strain Fiocruz L1-130) protein is Glycerol-3-phosphate dehydrogenase [NAD(P)+].